Here is a 339-residue protein sequence, read N- to C-terminus: Ferrochelatase (339 aa).

Fe cation is bound by residues His-202 and Glu-283.

The protein belongs to the ferrochelatase family.

The protein resides in the cytoplasm. The enzyme catalyses heme b + 2 H(+) = protoporphyrin IX + Fe(2+). The protein operates within porphyrin-containing compound metabolism; protoheme biosynthesis; protoheme from protoporphyrin-IX: step 1/1. Functionally, catalyzes the ferrous insertion into protoporphyrin IX. The chain is Ferrochelatase from Psychrobacter cryohalolentis (strain ATCC BAA-1226 / DSM 17306 / VKM B-2378 / K5).